A 123-amino-acid chain; its full sequence is Small ribosomal subunit protein uS13 (123 aa).

Residues 93 to 123 (HRKGLPVRGQNTKNNARTRKGPAKAIAGKKK) form a disordered region. Over residues 108 to 123 (ARTRKGPAKAIAGKKK) the composition is skewed to basic residues.

Belongs to the universal ribosomal protein uS13 family. As to quaternary structure, part of the 30S ribosomal subunit. Forms a loose heterodimer with protein S19. Forms two bridges to the 50S subunit in the 70S ribosome.

Located at the top of the head of the 30S subunit, it contacts several helices of the 16S rRNA. In the 70S ribosome it contacts the 23S rRNA (bridge B1a) and protein L5 of the 50S subunit (bridge B1b), connecting the 2 subunits; these bridges are implicated in subunit movement. Contacts the tRNAs in the A and P-sites. In Leuconostoc citreum (strain KM20), this protein is Small ribosomal subunit protein uS13.